A 41-amino-acid polypeptide reads, in one-letter code: Large ribosomal subunit protein bL36 (41 aa).

Belongs to the bacterial ribosomal protein bL36 family.

This chain is Large ribosomal subunit protein bL36, found in Erythrobacter litoralis (strain HTCC2594).